The chain runs to 484 residues: Glutamate--tRNA ligase (484 aa).

A 'HIGH' region motif is present at residues 11 to 21 (PSPTGLLHIGN). The 'KMSKS' region signature appears at 255 to 259 (KLSKR). Residue Lys258 coordinates ATP.

The protein belongs to the class-I aminoacyl-tRNA synthetase family. Glutamate--tRNA ligase type 1 subfamily. Monomer.

Its subcellular location is the cytoplasm. It carries out the reaction tRNA(Glu) + L-glutamate + ATP = L-glutamyl-tRNA(Glu) + AMP + diphosphate. Functionally, catalyzes the attachment of glutamate to tRNA(Glu) in a two-step reaction: glutamate is first activated by ATP to form Glu-AMP and then transferred to the acceptor end of tRNA(Glu). The protein is Glutamate--tRNA ligase of Streptococcus suis (strain 98HAH33).